Reading from the N-terminus, the 615-residue chain is Chaperone protein DnaK (615 aa).

Threonine 177 bears the Phosphothreonine; by autocatalysis mark. The disordered stretch occupies residues 567 to 615; the sequence is TKESQGIAMKAYQKAQEKQAQEKGTQENTTAKNEKPQDEVVDADFEEKK. A compositionally biased stretch (basic and acidic residues) spans 581–591; sequence AQEKQAQEKGT. Residues 605-615 are compositionally biased toward acidic residues; the sequence is EVVDADFEEKK.

This sequence belongs to the heat shock protein 70 family.

Acts as a chaperone. This is Chaperone protein DnaK from Onion yellows phytoplasma (strain OY-M).